Here is a 203-residue protein sequence, read N- to C-terminus: WUSCHEL-related homeobox 3 (203 aa).

A DNA-binding region (homeobox; WUS-type) is located at residues 4 to 68 (TPSTRWCPTP…NHKARERQRL (65 aa)). 3 disordered regions span residues 73–95 (CARHQQQPSPPSSTVPPAPTAAA), 109–135 (LHHHHHHHHPYAAAAAAQSHHLQQQQQ), and 180–203 (STSGGLKEDCCSSSKSSSCSTSTN). The span at 80–91 (PSPPSSTVPPAP) shows a compositional bias: pro residues. Residues 109-118 (LHHHHHHHHP) are compositionally biased toward basic residues. 2 stretches are compositionally biased toward low complexity: residues 119–135 (YAAAAAAQSHHLQQQQQ) and 190–203 (CSSSKSSSCSTSTN).

Belongs to the WUS homeobox family.

Its subcellular location is the nucleus. Its function is as follows. Transcription factor which may be involved in developmental processes. In Oryza sativa subsp. indica (Rice), this protein is WUSCHEL-related homeobox 3 (WOX3).